We begin with the raw amino-acid sequence, 695 residues long: NADPH--cytochrome P450 reductase (695 aa).

Topologically, residues 1–8 (MAQLDTLD) are lumenal. The helical transmembrane segment at 9 to 31 (LVVLAVLLVGSVAYFTKGTYWAV) threads the bilayer. Topologically, residues 32–695 (AKDPYASTGP…SGSYQEDVWS (664 aa)) are cytoplasmic. The Flavodoxin-like domain occupies 66 to 221 (CVIFYGSQTG…DFLAWKEPMW (156 aa)). Residues 72 to 77 (SQTGTA), 123 to 126 (ATYG), 169 to 178 (LGNNTYEHYN), and D204 contribute to the FMN site. The 262-residue stretch at 277 to 538 (HNPFIAPIAE…HVRHSNFKLP (262 aa)) folds into the FAD-binding FR-type domain. NADP(+) is bound at residue R296. Residues 451–454 (RYYS), 469–471 (TAV), and 486–489 (GVTT) each bind FAD. Residues T552, 614–615 (SR), 620–624 (KVYVQ), and E656 contribute to the NADP(+) site. W694 contributes to the FAD binding site.

The protein belongs to the NADPH--cytochrome P450 reductase family. This sequence in the N-terminal section; belongs to the flavodoxin family. In the C-terminal section; belongs to the flavoprotein pyridine nucleotide cytochrome reductase family. FAD serves as cofactor. The cofactor is FMN.

The protein resides in the endoplasmic reticulum membrane. It is found in the mitochondrion outer membrane. The protein localises to the cell membrane. It catalyses the reaction 2 oxidized [cytochrome P450] + NADPH = 2 reduced [cytochrome P450] + NADP(+) + H(+). Functionally, this enzyme is required for electron transfer from NADP to cytochrome P450 in microsomes. It can also provide electron transfer to heme oxygenase and cytochrome B5. Involved in ergosterol biosynthesis. The chain is NADPH--cytochrome P450 reductase from Aspergillus niger (strain ATCC MYA-4892 / CBS 513.88 / FGSC A1513).